The primary structure comprises 352 residues: Holliday junction branch migration complex subunit RuvB (352 aa).

The interval 1–26 (MIETDKLRAAAPERLISPQPADRQED) is disordered. Residues 4 to 193 (TDKLRAAAPE…FGIVSRLEFY (190 aa)) are large ATPase domain (RuvB-L). Residues Leu32, Arg33, Gly74, Lys77, Thr78, Thr79, 140 to 142 (EDF), Arg183, Tyr193, and Arg230 each bind ATP. Residue Thr78 coordinates Mg(2+). A small ATPAse domain (RuvB-S) region spans residues 194–264 (TPDELGFIVS…VADAALRMLD (71 aa)). The interval 267-352 (SLGLDLMDRK…RPGGTDLFGG (86 aa)) is head domain (RuvB-H). Arg322 and Arg327 together coordinate DNA.

It belongs to the RuvB family. As to quaternary structure, homohexamer. Forms an RuvA(8)-RuvB(12)-Holliday junction (HJ) complex. HJ DNA is sandwiched between 2 RuvA tetramers; dsDNA enters through RuvA and exits via RuvB. An RuvB hexamer assembles on each DNA strand where it exits the tetramer. Each RuvB hexamer is contacted by two RuvA subunits (via domain III) on 2 adjacent RuvB subunits; this complex drives branch migration. In the full resolvosome a probable DNA-RuvA(4)-RuvB(12)-RuvC(2) complex forms which resolves the HJ.

The protein localises to the cytoplasm. The catalysed reaction is ATP + H2O = ADP + phosphate + H(+). Its function is as follows. The RuvA-RuvB-RuvC complex processes Holliday junction (HJ) DNA during genetic recombination and DNA repair, while the RuvA-RuvB complex plays an important role in the rescue of blocked DNA replication forks via replication fork reversal (RFR). RuvA specifically binds to HJ cruciform DNA, conferring on it an open structure. The RuvB hexamer acts as an ATP-dependent pump, pulling dsDNA into and through the RuvAB complex. RuvB forms 2 homohexamers on either side of HJ DNA bound by 1 or 2 RuvA tetramers; 4 subunits per hexamer contact DNA at a time. Coordinated motions by a converter formed by DNA-disengaged RuvB subunits stimulates ATP hydrolysis and nucleotide exchange. Immobilization of the converter enables RuvB to convert the ATP-contained energy into a lever motion, pulling 2 nucleotides of DNA out of the RuvA tetramer per ATP hydrolyzed, thus driving DNA branch migration. The RuvB motors rotate together with the DNA substrate, which together with the progressing nucleotide cycle form the mechanistic basis for DNA recombination by continuous HJ branch migration. Branch migration allows RuvC to scan DNA until it finds its consensus sequence, where it cleaves and resolves cruciform DNA. This is Holliday junction branch migration complex subunit RuvB from Azoarcus sp. (strain BH72).